Consider the following 261-residue polypeptide: Small ribosomal subunit protein mS23 (261 aa).

Positions 234–261 (NPSESWATDEKDPKKNDDIEEDVEEIKL) are disordered. The segment covering 241-250 (TDEKDPKKND) has biased composition (basic and acidic residues). Positions 251–261 (DIEEDVEEIKL) are enriched in acidic residues.

This sequence belongs to the mitochondrion-specific ribosomal protein mS23 family. As to quaternary structure, component of the mitochondrial small ribosomal subunit.

It localises to the mitochondrion. This chain is Small ribosomal subunit protein mS23 (RSM25), found in Vanderwaltozyma polyspora (strain ATCC 22028 / DSM 70294 / BCRC 21397 / CBS 2163 / NBRC 10782 / NRRL Y-8283 / UCD 57-17) (Kluyveromyces polysporus).